We begin with the raw amino-acid sequence, 294 residues long: Ribosomal RNA small subunit methyltransferase H (294 aa).

S-adenosyl-L-methionine-binding positions include 36 to 38 (GGH), Asp-55, Phe-82, Asp-97, and Gln-104.

Belongs to the methyltransferase superfamily. RsmH family.

The protein localises to the cytoplasm. It carries out the reaction cytidine(1402) in 16S rRNA + S-adenosyl-L-methionine = N(4)-methylcytidine(1402) in 16S rRNA + S-adenosyl-L-homocysteine + H(+). In terms of biological role, specifically methylates the N4 position of cytidine in position 1402 (C1402) of 16S rRNA. The sequence is that of Ribosomal RNA small subunit methyltransferase H from Synechococcus sp. (strain CC9605).